Reading from the N-terminus, the 689-residue chain is uncharacterized protein (689 aa).

Ser566 is a binding site for substrate. Tyr579 serves as the catalytic Proton acceptor.

It belongs to the short-chain dehydrogenases/reductases (SDR) family.

This is an uncharacterized protein from Bacillus subtilis (strain 168).